The primary structure comprises 231 residues: Sensory transduction protein BceR (231 aa).

The Response regulatory domain maps to 3–116 (KLLLIEDDES…VLIAKIQAMF (114 aa)). 4-aspartylphosphate is present on Asp52. The ompR/PhoB-type DNA-binding region spans 127–225 (STIKTWCGAA…KVGQGYIAKE (99 aa)).

In terms of processing, phosphorylated by BceS.

The protein resides in the cytoplasm. In terms of biological role, member of the two-component regulatory system BceS/BceR involved in the regulation of bacitracin resistance. When activated by BceS, binds to the upstream region of the bceAB promoter and up-regulates the expression of these two genes. This is Sensory transduction protein BceR (bceR) from Bacillus subtilis (strain 168).